The following is a 200-amino-acid chain: Large ribosomal subunit protein bL25 (200 aa).

The protein belongs to the bacterial ribosomal protein bL25 family. CTC subfamily. As to quaternary structure, part of the 50S ribosomal subunit; part of the 5S rRNA/L5/L18/L25 subcomplex. Contacts the 5S rRNA. Binds to the 5S rRNA independently of L5 and L18.

This is one of the proteins that binds to the 5S RNA in the ribosome where it forms part of the central protuberance. This chain is Large ribosomal subunit protein bL25, found in Corynebacterium glutamicum (strain ATCC 13032 / DSM 20300 / JCM 1318 / BCRC 11384 / CCUG 27702 / LMG 3730 / NBRC 12168 / NCIMB 10025 / NRRL B-2784 / 534).